The primary structure comprises 678 residues: Serine/threonine-protein kinase mph1 (678 aa).

2 disordered regions span residues 39–93 and 114–209; these read KNDT…NSAL and LPST…SNSV. Composition is skewed to polar residues over residues 41-66 and 114-125; these read DTFS…SSGA and LPSTNASHSEVS. Positions 316-607 constitute a Protein kinase domain; sequence FIKLGVVGKG…LVHPFLNPLP (292 aa). Residues 322–330 and lysine 345 each bind ATP; that span reads VGKGGSSMV. Aspartate 442 serves as the catalytic Proton acceptor.

This sequence belongs to the protein kinase superfamily. Ser/Thr protein kinase family.

It catalyses the reaction L-seryl-[protein] + ATP = O-phospho-L-seryl-[protein] + ADP + H(+). The enzyme catalyses L-threonyl-[protein] + ATP = O-phospho-L-threonyl-[protein] + ADP + H(+). It carries out the reaction L-tyrosyl-[protein] + ATP = O-phospho-L-tyrosyl-[protein] + ADP + H(+). Functionally, involved in mitotic spindle assembly checkpoint signaling, a process that delays anaphase until chromosomes are bioriented on the spindle, and in the repair of incorrect mitotic kinetochore-spindle microtubule attachments. Phosphorylates spc7/knl1 on MELT motifs; phosphorylation is required for recruitment of the BUB1-BUB3 complex to kinetochores. The chain is Serine/threonine-protein kinase mph1 from Schizosaccharomyces pombe (strain 972 / ATCC 24843) (Fission yeast).